The sequence spans 468 residues: Cysteine--tRNA ligase (468 aa).

Position 28 (Cys-28) interacts with Zn(2+). The short motif at 30–40 (PTVYNYIHIGN) is the 'HIGH' region element. Zn(2+) is bound by residues Cys-212, His-237, and Glu-241. Residues 271–275 (KMSKS) carry the 'KMSKS' region motif. Lys-274 is a binding site for ATP.

It belongs to the class-I aminoacyl-tRNA synthetase family. As to quaternary structure, monomer. It depends on Zn(2+) as a cofactor.

Its subcellular location is the cytoplasm. It carries out the reaction tRNA(Cys) + L-cysteine + ATP = L-cysteinyl-tRNA(Cys) + AMP + diphosphate. In Latilactobacillus sakei subsp. sakei (strain 23K) (Lactobacillus sakei subsp. sakei), this protein is Cysteine--tRNA ligase.